The primary structure comprises 273 residues: Transposable element Tc1 transposase (273 aa).

It belongs to the transposase 5 family.

It localises to the nucleus. Probably essential for transposable element Tc1 transposition. The insertion of Tc1 is the main cause of spontaneous mutations. It is an endonuclease which can produce a single strand nick at the 5'-end of the transposon. This Caenorhabditis elegans protein is Transposable element Tc1 transposase (tc1a).